Consider the following 104-residue polypeptide: Large ribosomal subunit protein bL28 (104 aa).

Belongs to the bacterial ribosomal protein bL28 family.

The chain is Large ribosomal subunit protein bL28 from Wolbachia sp. subsp. Brugia malayi (strain TRS).